Here is a 212-residue protein sequence, read N- to C-terminus: MAHDMYPQPRPLLTPDLMIRAYAAGIFPMSEGADNPEVFWVDPQRRGVFPLNGFHISRTLRRQIRFGGYSVHINRDFAGVLDGCADREPTWINADLTACYLALHAQGLAHSVEIWDDEGLAGAVFGVTLGAAFFGESMFSRRTGGSKLALAHLIHRLRAGGFTLFDTQFVTDHLMSLGAFELPRSDYRAELSHALQLPADFMSLPEDVPLVV.

This sequence belongs to the L/F-transferase family.

It is found in the cytoplasm. It carries out the reaction N-terminal L-lysyl-[protein] + L-leucyl-tRNA(Leu) = N-terminal L-leucyl-L-lysyl-[protein] + tRNA(Leu) + H(+). The catalysed reaction is N-terminal L-arginyl-[protein] + L-leucyl-tRNA(Leu) = N-terminal L-leucyl-L-arginyl-[protein] + tRNA(Leu) + H(+). It catalyses the reaction L-phenylalanyl-tRNA(Phe) + an N-terminal L-alpha-aminoacyl-[protein] = an N-terminal L-phenylalanyl-L-alpha-aminoacyl-[protein] + tRNA(Phe). Functions in the N-end rule pathway of protein degradation where it conjugates Leu, Phe and, less efficiently, Met from aminoacyl-tRNAs to the N-termini of proteins containing an N-terminal arginine or lysine. The polypeptide is Leucyl/phenylalanyl-tRNA--protein transferase (Jannaschia sp. (strain CCS1)).